A 689-amino-acid chain; its full sequence is Probable serine/threonine-protein kinase abkC (689 aa).

Residues 42 to 79 are disordered; it reads NNSGNENYKNFNYNYKNKNNYNNNNNNNNSNSSSNNNG. The Protein kinase domain occupies 257–689; the sequence is WFDEEPMASG…NNKNNNEKNK (433 aa). ATP contacts are provided by residues 263-271 and Lys285; that span reads MASGSVAQV. The Proton acceptor role is filled by Asp417. A disordered region spans residues 652 to 689; the sequence is KQLNNDNNNNNNNNNNNKNNNDNNNKNNNNKNNNEKNK. Residues 655–683 show a composition bias toward low complexity; it reads NNDNNNNNNNNNNNKNNNDNNNKNNNNKN.

It belongs to the protein kinase superfamily. ADCK protein kinase family.

In Dictyostelium discoideum (Social amoeba), this protein is Probable serine/threonine-protein kinase abkC (abkC).